We begin with the raw amino-acid sequence, 468 residues long: Glutamine synthetase (468 aa).

Residues 13 to 97 (NEVKFVDLRF…IRCDILEPAT (85 aa)) form the GS beta-grasp domain. The GS catalytic domain maps to 105–468 (PRSIAKRAED…PVEFELYYSV (364 aa)). Mg(2+) contacts are provided by glutamate 130 and glutamate 132. Glutamate 208 lines the ATP pocket. Mg(2+)-binding residues include glutamate 213 and glutamate 220. L-glutamate is bound by residues 264-265 (NG) and glycine 265. Histidine 269 serves as a coordination point for Mg(2+). ATP-binding positions include 271-273 (HQS) and serine 273. L-glutamate is bound by residues arginine 321, glutamate 327, and arginine 339. 3 residues coordinate ATP: arginine 339, arginine 344, and lysine 352. Position 357 (glutamate 357) interacts with Mg(2+). Arginine 359 is an L-glutamate binding site. Position 397 is an O-AMP-tyrosine (tyrosine 397).

Belongs to the glutamine synthetase family. As to quaternary structure, oligomer of 12 subunits arranged in the form of two hexameric ring. Mg(2+) is required as a cofactor.

It localises to the cytoplasm. The enzyme catalyses L-glutamate + NH4(+) + ATP = L-glutamine + ADP + phosphate + H(+). Its activity is regulated as follows. The activity of this enzyme could be controlled by adenylation under conditions of abundant glutamine. Its function is as follows. Catalyzes the ATP-dependent biosynthesis of glutamine from glutamate and ammonia. This chain is Glutamine synthetase, found in Vibrio alginolyticus.